Consider the following 362-residue polypeptide: Phosphoserine aminotransferase (362 aa).

An L-glutamate-binding site is contributed by arginine 42. Pyridoxal 5'-phosphate-binding residues include tryptophan 102, threonine 154, aspartate 174, and glutamine 197. An N6-(pyridoxal phosphate)lysine modification is found at lysine 198. 239–240 is a pyridoxal 5'-phosphate binding site; that stretch reads NT.

Belongs to the class-V pyridoxal-phosphate-dependent aminotransferase family. SerC subfamily. Homodimer. The cofactor is pyridoxal 5'-phosphate.

The protein resides in the cytoplasm. The catalysed reaction is O-phospho-L-serine + 2-oxoglutarate = 3-phosphooxypyruvate + L-glutamate. The enzyme catalyses 4-(phosphooxy)-L-threonine + 2-oxoglutarate = (R)-3-hydroxy-2-oxo-4-phosphooxybutanoate + L-glutamate. It functions in the pathway amino-acid biosynthesis; L-serine biosynthesis; L-serine from 3-phospho-D-glycerate: step 2/3. The protein operates within cofactor biosynthesis; pyridoxine 5'-phosphate biosynthesis; pyridoxine 5'-phosphate from D-erythrose 4-phosphate: step 3/5. Catalyzes the reversible conversion of 3-phosphohydroxypyruvate to phosphoserine and of 3-hydroxy-2-oxo-4-phosphonooxybutanoate to phosphohydroxythreonine. In Haemophilus ducreyi (strain 35000HP / ATCC 700724), this protein is Phosphoserine aminotransferase.